We begin with the raw amino-acid sequence, 466 residues long: tRNA(Ile)-lysidine synthase (466 aa).

ATP is bound at residue 42–47 (SGGVDS).

This sequence belongs to the tRNA(Ile)-lysidine synthase family.

It localises to the cytoplasm. It catalyses the reaction cytidine(34) in tRNA(Ile2) + L-lysine + ATP = lysidine(34) in tRNA(Ile2) + AMP + diphosphate + H(+). Its function is as follows. Ligates lysine onto the cytidine present at position 34 of the AUA codon-specific tRNA(Ile) that contains the anticodon CAU, in an ATP-dependent manner. Cytidine is converted to lysidine, thus changing the amino acid specificity of the tRNA from methionine to isoleucine. In Anaplasma marginale (strain St. Maries), this protein is tRNA(Ile)-lysidine synthase.